The primary structure comprises 321 residues: NADPH-dependent codeinone reductase 1-3 (321 aa).

Thr-27 and Asp-51 together coordinate NADPH. Residues Tyr-56 and His-119 each act as proton donor in the active site. His-119 serves as a coordination point for substrate. Residues Gln-187, Ser-214, Leu-216, Ser-264, and Arg-269 each coordinate NADPH. The tract at residues 300–321 (ADFLLSPTGPFKTEEEFWDEKD) is disordered.

It belongs to the aldo/keto reductase family. Latex secreting cells (laticifer cells). Expressed constitutively in all organs with highest levels in capsules. Restricted to the parietal region of sieve elements adjacent or proximal to laticifers in roots, stems, leaves and carpels.

Its subcellular location is the cytoplasm. The protein localises to the cytosol. It catalyses the reaction codeine + NADP(+) = codeinone + NADPH + H(+). The catalysed reaction is neopine + NADP(+) = neopinone + NADPH + H(+). It carries out the reaction morphine + NADP(+) = morphinone + NADPH + H(+). The enzyme catalyses neomorphine + NADP(+) = neomorphinone + NADPH + H(+). The protein operates within alkaloid biosynthesis; morphine biosynthesis. In terms of biological role, NADPH-dependent codeinone reductase involved in biosynthesis of morphinan-type benzylisoquinoline and opiate alkaloids natural products. Reduces codeinone to codeine in the penultimate step in morphine biosynthesis. Can use morphinone, hydrocodone and hydromorphone as substrate during reductive reaction with NADPH as cofactor, and morphine and dihydrocodeine as substrate during oxidative reaction with NADP as cofactor. Converts morphinone to morphine, and neomorphinone to neomorphine. Reduces irreversibly neopinone, a spontaneous isomer of codeinone, to neopine; in planta, neopine levels are limited to low levels. The sequence is that of NADPH-dependent codeinone reductase 1-3 from Papaver somniferum (Opium poppy).